The sequence spans 265 residues: Glutamate racemase (265 aa).

Substrate-binding positions include 7–8 and 39–40; these read DS and YG. The Proton donor/acceptor role is filled by cysteine 70. 71–72 is a binding site for substrate; the sequence is NT. Cysteine 179 acts as the Proton donor/acceptor in catalysis. 180–181 provides a ligand contact to substrate; that stretch reads TH.

It belongs to the aspartate/glutamate racemases family.

It carries out the reaction L-glutamate = D-glutamate. The protein operates within cell wall biogenesis; peptidoglycan biosynthesis. Functionally, provides the (R)-glutamate required for cell wall biosynthesis. The protein is Glutamate racemase of Gloeobacter violaceus (strain ATCC 29082 / PCC 7421).